The primary structure comprises 428 residues: Adenylosuccinate synthetase (428 aa).

GTP-binding positions include 12–18 (GDEGKGK) and 40–42 (GHT). Catalysis depends on D13, which acts as the Proton acceptor. Mg(2+)-binding residues include D13 and G40. IMP-binding positions include 13–16 (DEGK), 38–41 (NAGH), T130, R144, Q225, T240, and R304. The active-site Proton donor is the H41. 300–306 (VTTGRAR) provides a ligand contact to substrate. GTP is bound by residues R306, 332-334 (KID), and 414-416 (SVG).

Belongs to the adenylosuccinate synthetase family. Homodimer. Requires Mg(2+) as cofactor.

It localises to the cytoplasm. The enzyme catalyses IMP + L-aspartate + GTP = N(6)-(1,2-dicarboxyethyl)-AMP + GDP + phosphate + 2 H(+). The protein operates within purine metabolism; AMP biosynthesis via de novo pathway; AMP from IMP: step 1/2. Plays an important role in the de novo pathway of purine nucleotide biosynthesis. Catalyzes the first committed step in the biosynthesis of AMP from IMP. The chain is Adenylosuccinate synthetase from Clostridium acetobutylicum (strain ATCC 824 / DSM 792 / JCM 1419 / IAM 19013 / LMG 5710 / NBRC 13948 / NRRL B-527 / VKM B-1787 / 2291 / W).